A 242-amino-acid chain; its full sequence is Methylthioribulose-1-phosphate dehydratase (242 aa).

C97 contributes to the substrate binding site. The Zn(2+) site is built by H115 and H117. E139 serves as the catalytic Proton donor/acceptor. H195 provides a ligand contact to Zn(2+).

It belongs to the aldolase class II family. MtnB subfamily. In terms of assembly, homotetramer. Interacts with APAF1. May interact with CASP1. Zn(2+) is required as a cofactor.

It is found in the cytoplasm. It carries out the reaction 5-(methylsulfanyl)-D-ribulose 1-phosphate = 5-methylsulfanyl-2,3-dioxopentyl phosphate + H2O. The protein operates within amino-acid biosynthesis; L-methionine biosynthesis via salvage pathway; L-methionine from S-methyl-5-thio-alpha-D-ribose 1-phosphate: step 2/6. Catalyzes the dehydration of methylthioribulose-1-phosphate (MTRu-1-P) into 2,3-diketo-5-methylthiopentyl-1-phosphate (DK-MTP-1-P). Functions in the methionine salvage pathway, which plays a key role in cancer, apoptosis, microbial proliferation and inflammation. May inhibit the CASP1-related inflammatory response (pyroptosis), the CASP9-dependent apoptotic pathway and the cytochrome c-dependent and APAF1-mediated cell death. This is Methylthioribulose-1-phosphate dehydratase from Bos taurus (Bovine).